The primary structure comprises 390 residues: Chorismate synthase 2 (390 aa).

2 residues coordinate NADP(+): R39 and R45. Residues R132–S134, N253–A254, G298, K313–T317, and R339 contribute to the FMN site.

It belongs to the chorismate synthase family. As to quaternary structure, homotetramer. Requires FMNH2 as cofactor.

The enzyme catalyses 5-O-(1-carboxyvinyl)-3-phosphoshikimate = chorismate + phosphate. It participates in metabolic intermediate biosynthesis; chorismate biosynthesis; chorismate from D-erythrose 4-phosphate and phosphoenolpyruvate: step 7/7. Functionally, catalyzes the anti-1,4-elimination of the C-3 phosphate and the C-6 proR hydrogen from 5-enolpyruvylshikimate-3-phosphate (EPSP) to yield chorismate, which is the branch point compound that serves as the starting substrate for the three terminal pathways of aromatic amino acid biosynthesis. This reaction introduces a second double bond into the aromatic ring system. The sequence is that of Chorismate synthase 2 from Bacillus cereus (strain ATCC 14579 / DSM 31 / CCUG 7414 / JCM 2152 / NBRC 15305 / NCIMB 9373 / NCTC 2599 / NRRL B-3711).